Reading from the N-terminus, the 544-residue chain is Chaperonin GroEL 3 (544 aa).

ATP contacts are provided by residues 30–33 (TLGP), Lys-51, 87–91 (DGTTT), Gly-415, and Asp-496.

Belongs to the chaperonin (HSP60) family. In terms of assembly, forms a cylinder of 14 subunits composed of two heptameric rings stacked back-to-back. Interacts with the co-chaperonin GroES.

The protein localises to the cytoplasm. The catalysed reaction is ATP + H2O + a folded polypeptide = ADP + phosphate + an unfolded polypeptide.. In terms of biological role, together with its co-chaperonin GroES, plays an essential role in assisting protein folding. The GroEL-GroES system forms a nano-cage that allows encapsulation of the non-native substrate proteins and provides a physical environment optimized to promote and accelerate protein folding. The chain is Chaperonin GroEL 3 from Rhizobium etli (strain ATCC 51251 / DSM 11541 / JCM 21823 / NBRC 15573 / CFN 42).